Consider the following 364-residue polypeptide: Probable dual-specificity RNA methyltransferase RlmN (364 aa).

The active-site Proton acceptor is E107. Residues 113–346 enclose the Radical SAM core domain; that stretch reads HNYGNSVCVT…VTIRREHGHD (234 aa). A disulfide bridge connects residues C120 and C351. [4Fe-4S] cluster is bound by residues C127, C131, and C134. S-adenosyl-L-methionine contacts are provided by residues 177 to 178, S209, 232 to 234, and N308; these read GE and SLH. C351 (S-methylcysteine intermediate) is an active-site residue.

This sequence belongs to the radical SAM superfamily. RlmN family. [4Fe-4S] cluster serves as cofactor.

It localises to the cytoplasm. The catalysed reaction is adenosine(2503) in 23S rRNA + 2 reduced [2Fe-2S]-[ferredoxin] + 2 S-adenosyl-L-methionine = 2-methyladenosine(2503) in 23S rRNA + 5'-deoxyadenosine + L-methionine + 2 oxidized [2Fe-2S]-[ferredoxin] + S-adenosyl-L-homocysteine. It carries out the reaction adenosine(37) in tRNA + 2 reduced [2Fe-2S]-[ferredoxin] + 2 S-adenosyl-L-methionine = 2-methyladenosine(37) in tRNA + 5'-deoxyadenosine + L-methionine + 2 oxidized [2Fe-2S]-[ferredoxin] + S-adenosyl-L-homocysteine. Specifically methylates position 2 of adenine 2503 in 23S rRNA and position 2 of adenine 37 in tRNAs. The polypeptide is Probable dual-specificity RNA methyltransferase RlmN (Geobacillus thermodenitrificans (strain NG80-2)).